The chain runs to 83 residues: Omega-agatoxin-Aa4b (83 aa).

The signal sequence occupies residues 1 to 20 (MKLCMTLLITAIAVVTFVVA). A propeptide spanning residues 21-35 (TQEESAEFNEVEESR) is cleaved from the precursor. 4 disulfides stabilise this stretch: Cys39-Cys55, Cys47-Cys60, Cys54-Cys71, and Cys62-Cys69. Ser81 bears the D-serine (Ser) mark.

The protein belongs to the neurotoxin 02 (plectoxin) family. 03 (omega-agtx) subfamily. Post-translationally, the toxin with D-Ser (named omega-aga IVC) is 80-90 fold more potent than that with L-Ser (omega-aga IVB) against Cav2.1/CACNA1A (P-type) channels in rat cerebellar Purkinje neurons and is more resistant to proteases. The epimerization is done by the venom peptide isomerase heterodimer. As to expression, expressed by the venom gland.

The protein localises to the secreted. Functionally, antagonist of voltage-gated Cav2.1/CACNA1A (P-type) calcium channels. Paralyzes insect by blocking neuromuscular transmission. The protein is Omega-agatoxin-Aa4b of Agelenopsis aperta (North American funnel-web spider).